Consider the following 266-residue polypeptide: Diphthine synthase (266 aa).

S-adenosyl-L-methionine-binding positions include Leu9, Asp84, Val87, 112-113 (SI), Leu169, Ala210, and His235.

The protein belongs to the diphthine synthase family. In terms of assembly, homodimer.

It catalyses the reaction 2-[(3S)-amino-3-carboxypropyl]-L-histidyl-[translation elongation factor 2] + 3 S-adenosyl-L-methionine = diphthine-[translation elongation factor 2] + 3 S-adenosyl-L-homocysteine + 3 H(+). The protein operates within protein modification; peptidyl-diphthamide biosynthesis. Functionally, S-adenosyl-L-methionine-dependent methyltransferase that catalyzes the trimethylation of the amino group of the modified target histidine residue in translation elongation factor 2 (EF-2), to form an intermediate called diphthine. The three successive methylation reactions represent the second step of diphthamide biosynthesis. This is Diphthine synthase from Methanosarcina mazei (strain ATCC BAA-159 / DSM 3647 / Goe1 / Go1 / JCM 11833 / OCM 88) (Methanosarcina frisia).